The chain runs to 359 residues: 3-dehydroquinate synthase (359 aa).

Residues 72 to 77, 106 to 110, 130 to 131, Lys143, Lys152, and 170 to 173 each bind NAD(+); these read DGEQYK, GVIGD, TT, and CLKT. Zn(2+) is bound by residues Glu185, His248, and His265.

The protein belongs to the sugar phosphate cyclases superfamily. Dehydroquinate synthase family. Co(2+) is required as a cofactor. Requires Zn(2+) as cofactor. It depends on NAD(+) as a cofactor.

It is found in the cytoplasm. It catalyses the reaction 7-phospho-2-dehydro-3-deoxy-D-arabino-heptonate = 3-dehydroquinate + phosphate. Its pathway is metabolic intermediate biosynthesis; chorismate biosynthesis; chorismate from D-erythrose 4-phosphate and phosphoenolpyruvate: step 2/7. Its function is as follows. Catalyzes the conversion of 3-deoxy-D-arabino-heptulosonate 7-phosphate (DAHP) to dehydroquinate (DHQ). The polypeptide is 3-dehydroquinate synthase (Photobacterium profundum (strain SS9)).